The following is a 617-amino-acid chain: Vacuolar protein sorting-associated protein 33B (617 aa).

It belongs to the STXBP/unc-18/SEC1 family. As to quaternary structure, interacts with vipas39. Widely expressed from 4 hours post-fertilization (hpf) to 24 hpf. At 48 hpf, localized to brain, retina, ear, liver and proximal intestine. This expression pattern is more pronounced at 72 hpf and persists through 5 days post-fertilization (dpf). At 3 dpf and 4 dpf, expression in the liver is predominantly in developing biliary epithelial cells. No expression detected in kidney or spinal cord.

The protein resides in the late endosome membrane. It is found in the lysosome membrane. Functionally, may play a role in vesicle-mediated protein trafficking to lysosomal compartments and in membrane docking/fusion reactions of late endosomes/lysosomes. Required for proper trafficking and targeting of the collagen-modifying enzyme lysyl hydroxylase 3 (LH3) to intracellular collagen. Mediates phagolysosomal fusion in macrophages. Proposed to be involved in endosomal maturation implicating vipas39. In epithelial cells, the vps33b:vipas39 complex may play a role in the apical recycling pathway and in the maintenance of the apical-basolateral polarity. Plays a role in bile duct development. The sequence is that of Vacuolar protein sorting-associated protein 33B from Danio rerio (Zebrafish).